We begin with the raw amino-acid sequence, 1033 residues long: Potassium-transporting ATPase alpha chain 1 (1033 aa).

Over 1–96 the chain is Cytoplasmic; the sequence is MGKENYELYS…NALRPPRGTP (96 aa). Phosphotyrosine is present on residues Tyr-6 and Tyr-9. A disordered region spans residues 14–39; sequence GTGPGGDMAAKMSKKKAGGGGGKKKE. Residues 25–38 show a composition bias toward basic residues; it reads MSKKKAGGGGGKKK. Ser-26 bears the Phosphoserine mark. A helical membrane pass occupies residues 97–117; it reads EYVKFARQLAGGLQCLMWVAA. Residues 118–140 are Lumenal-facing; that stretch reads AICLIAFAIQASEGDLTTDDNLY. Residues 141–161 traverse the membrane as a helical segment; the sequence is LALALIAVVVVTGCFGYYQEF. Over 162 to 297 the chain is Cytoplasmic; it reads KSTNIIASFK…NEKTPIAIEI (136 aa). A helical membrane pass occupies residues 298-317; the sequence is EHFVDIIAGLAILFGATFFV. Residues 318-329 lie on the Lumenal side of the membrane; sequence VAMCIGYTFLRA. The helical transmembrane segment at 330-347 threads the bilayer; it reads MVFFMAIVVAYVPEGLLA. K(+)-binding residues include Val-338, Ala-339, Val-341, and Glu-343. The Cytoplasmic segment spans residues 348–781; that stretch reads TVTVCLSLTA…EQGRLIFDNL (434 aa). Catalysis depends on Asp-385, which acts as the 4-aspartylphosphate intermediate. 2 residues coordinate Mg(2+): Asp-385 and Thr-387. Ser-461 and Ser-599 each carry phosphoserine. 2 residues coordinate Mg(2+): Asp-726 and Asp-730. The helical transmembrane segment at 782–801 threads the bilayer; the sequence is KKSIAYTLTKNIPELTPYLI. Glu-795 is a K(+) binding site. The Lumenal segment spans residues 802-811; that stretch reads YITVSVPLPL. A helical membrane pass occupies residues 812–832; that stretch reads GCITILFIELCTDIFPSVSLA. Residue Glu-820 participates in K(+) binding. Topologically, residues 833-852 are cytoplasmic; it reads YEKAESDIMHLRPRNPRRDR. A Phosphoserine modification is found at Ser-838. Residues 853–875 traverse the membrane as a helical segment; it reads LVNEPLAAYSYFQIGAIQSFAGF. Topologically, residues 876 to 927 are lumenal; the sequence is ADYFTAMAQEGWFPLLCVGLRPQWEDHHLQDLQDSYGQEWTFGQRLYQQYTC. Residues 928 to 947 traverse the membrane as a helical segment; the sequence is YTVFFISIEMCQIADVLIRK. The Cytoplasmic segment spans residues 948-961; the sequence is TRRLSAFQQGFFRN. Position 952 is a phosphoserine; by PKA (Ser-952). A helical transmembrane segment spans residues 962 to 980; sequence RILVIAIVFQVCIGCFLCY. The Lumenal portion of the chain corresponds to 981–995; that stretch reads CPGMPNIFNFMPIRF. Residues 996-1016 traverse the membrane as a helical segment; that stretch reads QWWLVPMPFGLLIFVYDEIRK. At 1017–1033 the chain is on the cytoplasmic side; it reads LGVRCCPGSWWDQELYY.

Belongs to the cation transport ATPase (P-type) (TC 3.A.3) family. Type IIC subfamily. In terms of assembly, the gastric H(+)/K(+) ATPase pump is composed of the catalytic alpha subunit ATP4A and the regulatory beta subunit ATP4B. Interacts (via the P-domain) with ATP4B (via N-terminus); this interaction stabilizes the lumenal-open E2 conformation state and prevents the reverse reaction of the transport cycle.

The protein localises to the apical cell membrane. It carries out the reaction K(+)(out) + ATP + H2O + H(+)(in) = K(+)(in) + ADP + phosphate + 2 H(+)(out). The catalytic subunit of the gastric H(+)/K(+) ATPase pump which transports H(+) ions in exchange for K(+) ions across the apical membrane of parietal cells. Uses ATP as an energy source to pump H(+) ions to the gastric lumen while transporting K(+) ion from the lumen into the cell. Remarkably generates a million-fold proton gradient across the gastric parietal cell membrane, acidifying the gastric juice down to pH 1. Within a transport cycle, the transfer of a H(+) ion across the membrane is coupled to ATP hydrolysis and is associated with a transient phosphorylation that shifts the pump conformation from inward-facing (E1) to outward-facing state (E2). The release of the H(+) ion in the stomach lumen is followed by binding of K(+) ion converting the pump conformation back to the E1 state. This Rattus norvegicus (Rat) protein is Potassium-transporting ATPase alpha chain 1 (Atp4a).